We begin with the raw amino-acid sequence, 2642 residues long: Fusarielin synthase FSL1 (2642 aa).

The 445-residue stretch at 6–450 folds into the Ketosynthase family 3 (KS3) domain; sequence NEPIAIIGTG…GTNAHAILEA (445 aa). Residues cysteine 179, histidine 318, and histidine 370 each act as for beta-ketoacyl synthase activity in the active site. A malonyl-CoA:ACP transacylase (MAT) domain region spans residues 566-890; sequence VFTGQGAQWA…PYTSALVRGK (325 aa). The active-site For malonyltransferase activity is serine 659. The tract at residues 965–1101 is N-terminal hotdog fold; sequence HDLLGIQTAD…GKVCIFLQTE (137 aa). The interval 965 to 1279 is dehydratase (DH) domain; it reads HDLLGIQTAD…SFSPFAAATD (315 aa). The 316-residue stretch at 965–1280 folds into the PKS/mFAS DH domain; sequence HDLLGIQTAD…FSPFAAATDR (316 aa). Catalysis depends on histidine 997, which acts as the Proton acceptor; for dehydratase activity. The interval 1126–1280 is C-terminal hotdog fold; it reads MAGIDVERFY…FSPFAAATDR (155 aa). The Proton donor; for dehydratase activity role is filled by aspartate 1189. The interval 1423-1622 is methyltransferase (MET) domain; it reads NYLDRYYTHA…GVDTNTPMPD (200 aa). The segment at 2244 to 2423 is ketoreductase (KR) domain; that stretch reads TYWMLGLTGD…GHNAAVIDIS (180 aa). A Carrier domain is found at 2556–2635; the sequence is QEVTSVLTSC…DLADYILESL (80 aa). Serine 2595 carries the O-(pantetheine 4'-phosphoryl)serine modification.

Requires pantetheine 4'-phosphate as cofactor.

The protein operates within secondary metabolite biosynthesis. Reducing polyketide synthase; part of the gene cluster that mediates the biosynthesis of fusarielins F, G and H, decaketide compounds with 5 methylations and a decaline core that act as mycoestrogens as they stimulate growth of MCF-7 breast cancer cells. The initial compound in the pathway is produced by the reducing polyketide synthase FSL1. FSL1 lacks an active enoyl reductase (ER) domain and biosynthesis of fusarielins relies on the trans-acting enoyl reductase FSL5, before it is released through hydrolysis catalyzed by the thioesterase FSL2. Fusarielins F, G, and H have a C11=C12 cis double bond and is fully reduced between C10 and C11 and between C12 and C13. FSL3 can be involved in the formation of the C11=C12 cis double bond by moving a hypothetical C10=C11 or C12=C13 trans double bond to form prefusarielin. Prefusarielin is oxygenated at C15 and C16 by the cytochrome P450 monooxygenase FSL4, resulting in fusarielin F, which subsequently is epoxidized into fusarielin G by the same enzyme. The final step in the pathway is a reduction of the carboxylic acid moiety to yield fusarielin H via a still undetermined mechanism. The polypeptide is Fusarielin synthase FSL1 (Gibberella zeae (strain ATCC MYA-4620 / CBS 123657 / FGSC 9075 / NRRL 31084 / PH-1) (Wheat head blight fungus)).